A 65-amino-acid chain; its full sequence is 7 kDa A-type inclusion protein (65 aa).

Positions 1 to 20 (MSNQNIPQLSEYQTSVSQVA) are enriched in polar residues. Residues 1–31 (MSNQNIPQLSEYQTSVSQVAVTPPPKPETPQ) form a disordered region.

This chain is 7 kDa A-type inclusion protein, found in Vaccinia virus (strain Copenhagen) (VACV).